The sequence spans 487 residues: MDANGGPVQIRTQNYVKLGYHYLITHFFKLMFLPLMAVLFMNVSLLSLNHLQLYYNSTGFIFVITLAIVGSIVFFMSRPRSIYLLDYSCYLPPSSQKVSYQKFMNNSSLIQDFSETSLEFQRKILIRSGLGEETYLPDSIHSIPPRPTMAAAREEAEQVIFGALDNLFENTKINPREIGVLVVNCSLFNPTPSLSAMIVNKYKLRGNIKSFNLGGMGCSAGVIAVDLASDMLQIHRNTFALVVSTENITQNWYFGNKKAMLIPNCLFRVGGSAVLLSNKPLDRKRSKYKLVHTVRTHKGSDENAFNCVYQEQDECLKTGVSLSKDLMAIAGEALKTNITSLGPLVLPISEQILFFATFVAKRLFNDKKKKPYIPDFKLALDHFCIHAGGRAVIDELEKSLKLSPKHVEASRMTLHRFGNTSSSSIWYELAYTEAKGRMRKGNRVWQIAFGSGFKCNSAVWVALRNVEPSVNNPWEHCIHRYPVKIDL.

Transmembrane regions (helical) follow at residues 23 to 43 (LITHFFKLMFLPLMAVLFMNV) and 57 to 77 (STGFIFVITLAIVGSIVFFMS). The FAE domain maps to 74–363 (FFMSRPRSIY…FFATFVAKRL (290 aa)). Active-site residues include Cys218, His297, His382, His386, His415, and Asn419.

The protein belongs to the thiolase-like superfamily. Chalcone/stilbene synthases family. Expressed in flowers.

The protein resides in the membrane. The catalysed reaction is a very-long-chain acyl-CoA + malonyl-CoA + H(+) = a very-long-chain 3-oxoacyl-CoA + CO2 + CoA. It participates in lipid metabolism; fatty acid biosynthesis. With respect to regulation, inhibited by K3 herbicides such as alachlor, allidochlor, anilofos, cafenstrole, fentrazamide and flufenacet. Strongly inhibited by metazachlor. Its function is as follows. Active on saturated acyl-CoAs up to C22. Mediates the synthesis of VLCFAs from 20 to 26 carbons in length (e.g. C20:1, C20, C24, C26). The sequence is that of 3-ketoacyl-CoA synthase 17 from Arabidopsis thaliana (Mouse-ear cress).